A 529-amino-acid polypeptide reads, in one-letter code: Peptide chain release factor 3 (529 aa).

The 270-residue stretch at 11-280 (SKRRTFAIIS…GLTDWAPAPL (270 aa)) folds into the tr-type G domain. Residues 20 to 27 (SHPDAGKT), 88 to 92 (DTPGH), and 142 to 145 (NKLD) each bind GTP.

It belongs to the TRAFAC class translation factor GTPase superfamily. Classic translation factor GTPase family. PrfC subfamily.

The protein resides in the cytoplasm. Functionally, increases the formation of ribosomal termination complexes and stimulates activities of RF-1 and RF-2. It binds guanine nucleotides and has strong preference for UGA stop codons. It may interact directly with the ribosome. The stimulation of RF-1 and RF-2 is significantly reduced by GTP and GDP, but not by GMP. The sequence is that of Peptide chain release factor 3 from Vibrio vulnificus (strain CMCP6).